The primary structure comprises 420 residues: Trophoblast glycoprotein (420 aa).

The N-terminal stretch at 1–31 is a signal peptide; it reads MPGGCSRGPAAGDGRLRLARLALVLLGWVSS. Over 32 to 355 the chain is Extracellular; sequence SSPTSSASSF…PILPPSLQTS (324 aa). The LRRNT domain maps to 53-91; that stretch reads SAQPPLPDQCPALCECSEAARTVKCVNRNLTEVPTDLPA. Cystine bridges form between Cys62–Cys68 and Cys66–Cys77. Asn81 carries an N-linked (GlcNAc...) asparagine glycan. 7 LRR repeats span residues 92–113, 116–139, 141–163, 172–204, 209–232, 233–255, and 256–275; these read YVRN…AFAR, PLAE…GAFE, LPSL…FAFS, PSPL…AALL, LQGL…VLAQ, LPSL…VSFR, and NLTH…VLHN. Asn124 carries an N-linked (GlcNAc...) asparagine glycan. The N-linked (GlcNAc...) asparagine glycan is linked to Asn275. Positions 283–346 constitute an LRRCT domain; the sequence is GLPHIRVFLD…LNSADLDCDP (64 aa). 2 cysteine pairs are disulfide-bonded: Cys298-Cys323 and Cys300-Cys344. The chain crosses the membrane as a helical span at residues 356–376; it reads YVFLGIVLALIGAIFLLVLYL. At 377–420 the chain is on the cytoplasmic side; sequence NRKGIKKWMHNIRDACRDHMEGYHYRYEINADPRLTNLSSNSDV. Ser418 carries the post-translational modification Phosphoserine.

Highly glycosylated. In terms of tissue distribution, expressed by all types of trophoblasts as early as 9 weeks of development. Specific for trophoblastic cells except for amniotic epithelium. In adult tissues, the expression is limited to a few epithelial cell types but is found on a variety of carcinoma.

Its subcellular location is the cell membrane. Functionally, may function as an inhibitor of Wnt/beta-catenin signaling by indirectly interacting with LRP6 and blocking Wnt3a-dependent LRP6 internalization. This chain is Trophoblast glycoprotein (TPBG), found in Homo sapiens (Human).